The following is a 222-amino-acid chain: Uracil-DNA glycosylase (222 aa).

D66 serves as the catalytic Proton acceptor.

This sequence belongs to the uracil-DNA glycosylase (UDG) superfamily. UNG family.

The protein localises to the cytoplasm. It carries out the reaction Hydrolyzes single-stranded DNA or mismatched double-stranded DNA and polynucleotides, releasing free uracil.. In terms of biological role, excises uracil residues from the DNA which can arise as a result of misincorporation of dUMP residues by DNA polymerase or due to deamination of cytosine. This is Uracil-DNA glycosylase from Porphyromonas gingivalis (strain ATCC 33277 / DSM 20709 / CIP 103683 / JCM 12257 / NCTC 11834 / 2561).